The following is a 201-amino-acid chain: uncharacterized protein (201 aa).

Disordered stretches follow at residues 46-80 and 143-201; these read PLVN…SYDE and SSTS…ANPA. 2 stretches are compositionally biased toward polar residues: residues 64 to 78 and 143 to 167; these read GSQN…SQSY and SSTS…NSPA.

This is an uncharacterized protein from Legionella pneumophila.